The sequence spans 318 residues: Dimethyladenosine transferase (318 aa).

Residues His37, Leu39, Gly64, Glu85, Asp113, and Asn128 each contribute to the S-adenosyl-L-methionine site.

Belongs to the class I-like SAM-binding methyltransferase superfamily. rRNA adenine N(6)-methyltransferase family.

Its subcellular location is the cytoplasm. The protein resides in the nucleus. It is found in the nucleolus. It carries out the reaction adenosine(1779)/adenosine(1780) in 18S rRNA + 4 S-adenosyl-L-methionine = N(6)-dimethyladenosine(1779)/N(6)-dimethyladenosine(1780) in 18S rRNA + 4 S-adenosyl-L-homocysteine + 4 H(+). In terms of biological role, specifically dimethylates two adjacent adenosines in the loop of a conserved hairpin near the 3'-end of 18S rRNA in the 40S particle. The sequence is that of Dimethyladenosine transferase from Saccharomyces cerevisiae (strain ATCC 204508 / S288c) (Baker's yeast).